We begin with the raw amino-acid sequence, 186 residues long: Protein FAM9B (186 aa).

Positions 1-93 are disordered; the sequence is MAAWGKKHAG…KHALRKKQLK (93 aa). Basic and acidic residues-rich tracts occupy residues 10–27 and 34–58; these read GKDP…FTET and DEHG…KPED. Basic residues predominate over residues 66–93; the sequence is KRKRMKMDKTCSKTKNKSKHALRKKQLK.

Belongs to the XLR/SYCP3 family. In terms of tissue distribution, expressed in testis and ovary (at protein level).

The protein resides in the nucleus. The protein localises to the cytoplasm. Its subcellular location is the chromosome. Functionally, may play a role in meiosis. This Homo sapiens (Human) protein is Protein FAM9B.